Here is a 311-residue protein sequence, read N- to C-terminus: JNK1/MAPK8-associated membrane protein (311 aa).

Topologically, residues 1 to 57 (MAVDIQPACLGLYCGKTLLFKNGSTEIYGECGVCPRGQRTNAQKYCQPCTESPELYD) are lumenal. The N-linked (GlcNAc...) asparagine glycan is linked to Asn-22. A helical transmembrane segment spans residues 58–78 (WLYLGFMAMLPLVLHWFFIEW). The Cytoplasmic segment spans residues 79–87 (YSGKKSSSA). A helical membrane pass occupies residues 88 to 108 (LFQHITALFECSMAAIITLLV). The Lumenal segment spans residues 109–149 (SDPVGVLYIRSCRVLMLSDWYTMLYNPSPDYVTTVHCTHEA). The chain crosses the membrane as a helical span at residues 150–170 (VYPLYTIVFIYYAFCLVLMML). Over 171–188 (LRPLLVKKIACGLGKSDR) the chain is Cytoplasmic. Residues 189–209 (FKSIYAALYFFPILTVLQAVG) form a helical membrane-spanning segment. Position 210 (Gly-210) is a topological domain, lumenal. A helical transmembrane segment spans residues 211 to 231 (GLLYYAFPYIILVLSLVTLAV). Residues 232–250 (YMSASEIENCYDLLVRKKR) are Cytoplasmic-facing. Residues 251–271 (LIVLFSHWLLHAYGIISISRV) traverse the membrane as a helical segment. The Lumenal segment spans residues 272-277 (DKLEQD). A helical membrane pass occupies residues 278 to 298 (LPLLALVPTPALFYLFTAKFT). Residues 299–311 (EPSRILSEGANGH) lie on the Cytoplasmic side of the membrane.

As to quaternary structure, interacts with RNF5 and MAPK8, but not with MAPK9. Binding to MAPK8 occurs before and after exposure to stress, such as UV irradiation. After exposure to stress, interacts with phosphorylated MAPK8. Competes with DUSP10 for MAPK8 binding. Associates with multiple components of the proteasome and with ERAD regulatory proteins including AMFR/GP78, CANX, PSMC1, PSMC2, PSMC3/TBP1, PSMC5, PSMC6, PSMD8, SEC61-ALPHA and UFD1. Interacts with DERL1 (in the presence of misfolded protein CFTR(F508del)). Ubiquitinated by RNF5 via 'Lys-63'-linked ubiquitin linkage in a UBE2N-dependent manner. Ubiquitination decreases association with components of the proteasome and ERAD.

The protein resides in the endoplasmic reticulum membrane. In terms of biological role, regulates the duration of MAPK8 activity in response to various stress stimuli. Facilitates degradation of misfolded endoplasmic reticulum (ER) proteins through the recruitment of components of the proteasome and endoplasmic reticulum-associated degradation (ERAD) system. In Homo sapiens (Human), this protein is JNK1/MAPK8-associated membrane protein (JKAMP).